We begin with the raw amino-acid sequence, 248 residues long: Pulmonary surfactant-associated protein A (248 aa).

Positions M1 to C20 are cleaved as a signal peptide. The 70-residue stretch at G31–P100 folds into the Collagen-like domain. The tract at residues P33–P100 is disordered. Positions P42–K51 are enriched in basic and acidic residues. Positions P54–D65 are enriched in pro residues. The region spanning I134 to E247 is the C-type lectin domain. 2 disulfide bridges follow: C155-C246 and C224-C238. A glycan (N-linked (GlcNAc...) asparagine) is linked at N207. Residues E215, A217, N234, and D235 each coordinate Ca(2+).

This sequence belongs to the SFTPA family. As to quaternary structure, oligomeric complex of 6 set of homotrimers.

It localises to the secreted. The protein resides in the extracellular space. It is found in the extracellular matrix. Its subcellular location is the surface film. Its function is as follows. In presence of calcium ions, it binds to surfactant phospholipids and contributes to lower the surface tension at the air-liquid interface in the alveoli of the mammalian lung and is essential for normal respiration. Enhances the expression of MYO18A/SP-R210 on alveolar macrophages. This Macaca mulatta (Rhesus macaque) protein is Pulmonary surfactant-associated protein A (SFTPA1).